Reading from the N-terminus, the 38-residue chain is Photosystem I reaction center subunit VIII (38 aa).

Residues 12–32 (WILIPIIGWLMPAVVMGLLFL) traverse the membrane as a helical segment.

This sequence belongs to the PsaI family.

The protein resides in the cellular thylakoid membrane. May help in the organization of the PsaL subunit. The protein is Photosystem I reaction center subunit VIII of Gloeothece citriformis (strain PCC 7424) (Cyanothece sp. (strain PCC 7424)).